A 203-amino-acid chain; its full sequence is ATP-dependent Clp protease proteolytic subunit (203 aa).

S107 (nucleophile) is an active-site residue. H132 is an active-site residue.

It belongs to the peptidase S14 family. As to quaternary structure, fourteen ClpP subunits assemble into 2 heptameric rings which stack back to back to give a disk-like structure with a central cavity, resembling the structure of eukaryotic proteasomes.

The protein resides in the cytoplasm. It carries out the reaction Hydrolysis of proteins to small peptides in the presence of ATP and magnesium. alpha-casein is the usual test substrate. In the absence of ATP, only oligopeptides shorter than five residues are hydrolyzed (such as succinyl-Leu-Tyr-|-NHMec, and Leu-Tyr-Leu-|-Tyr-Trp, in which cleavage of the -Tyr-|-Leu- and -Tyr-|-Trp bonds also occurs).. Functionally, cleaves peptides in various proteins in a process that requires ATP hydrolysis. Has a chymotrypsin-like activity. Plays a major role in the degradation of misfolded proteins. The sequence is that of ATP-dependent Clp protease proteolytic subunit from Shewanella frigidimarina (strain NCIMB 400).